The sequence spans 138 residues: High mobility group B protein 4 (138 aa).

Disordered stretches follow at residues 1-41 (MKGG…PPSA) and 105-138 (LKLA…EDDD). Positions 18-29 (KTRGRKAGKKTK) are enriched in basic residues. Positions 35 to 104 (PKRPPSAFFV…EYIKNVQQYN (70 aa)) form a DNA-binding region, HMG box. 2 positions are modified to phosphoserine: Ser-123 and Ser-130. Acidic residues predominate over residues 126 to 138 (DEAVSEEEAEDDD).

The protein belongs to the HMGB family. As to expression, mostly expressed roots and flowers, and, to a lower extent, in stems and leaves.

It localises to the nucleus. The protein localises to the cytoplasm. The protein resides in the cytosol. Functionally, binds preferentially double-stranded DNA. This is High mobility group B protein 4 (HMGB4) from Arabidopsis thaliana (Mouse-ear cress).